The following is a 619-amino-acid chain: tRNA (guanine(37)-N(1))-methyltransferase 2 (619 aa).

The N-terminal 10 residues, 1-10, are a transit peptide targeting the mitochondrion; that stretch reads MVSKLSLFRA. Residues R434, 472-473, 500-501, and N523 contribute to the S-adenosyl-L-methionine site; these read DL and DG.

This sequence belongs to the class I-like SAM-binding methyltransferase superfamily. TRM5/TYW2 family. As to quaternary structure, monomer.

Its subcellular location is the mitochondrion matrix. The protein localises to the nucleus. It localises to the cytoplasm. The catalysed reaction is guanosine(37) in tRNA + S-adenosyl-L-methionine = N(1)-methylguanosine(37) in tRNA + S-adenosyl-L-homocysteine + H(+). Its function is as follows. Specifically methylates the N1 position of guanosine-37 in various cytoplasmic and mitochondrial tRNAs. Methylation is not dependent on the nature of the nucleoside 5' of the target nucleoside. This is the first step in the biosynthesis of wybutosine (yW), a modified base adjacent to the anticodon of tRNAs and required for accurate decoding. This is tRNA (guanine(37)-N(1))-methyltransferase 2 from Arabidopsis thaliana (Mouse-ear cress).